Consider the following 490-residue polypeptide: Monocarboxylate transporter 3 (490 aa).

Over Met-1–Asp-14 the chain is Cytoplasmic. A helical transmembrane segment spans residues Gly-15–Phe-35. The Extracellular portion of the chain corresponds to Pro-36 to Ala-58. The chain crosses the membrane as a helical span at residues Trp-59–Val-79. The Cytoplasmic portion of the chain corresponds to Thr-80 to Arg-85. The helical transmembrane segment at Pro-86–Ser-106 threads the bilayer. Residues Arg-107–Ala-115 lie on the Extracellular side of the membrane. Residues Gly-116 to Leu-136 traverse the membrane as a helical segment. Over Tyr-137 to Gly-147 the chain is Cytoplasmic. A helical transmembrane segment spans residues Leu-148–Gly-168. Residues Glu-169–Gly-172 lie on the Extracellular side of the membrane. The chain crosses the membrane as a helical span at residues Trp-173–Val-193. Residues Met-194 to Met-230 lie on the Cytoplasmic side of the membrane. A helical transmembrane segment spans residues Val-231–Val-251. At Asn-252–Ala-257 the chain is on the extracellular side. The chain crosses the membrane as a helical span at residues Gly-258 to Ala-278. Over Arg-279 to Pro-293 the chain is Cytoplasmic. The helical transmembrane segment at His-294 to Ala-314 threads the bilayer. Residues Arg-315–Ser-318 lie on the Extracellular side of the membrane. The helical transmembrane segment at Tyr-319–Leu-339 threads the bilayer. Topologically, residues Gln-340–Arg-352 are cytoplasmic. A helical membrane pass occupies residues Phe-353–Pro-373. At Ser-374–Glu-386 the chain is on the extracellular side. A helical membrane pass occupies residues Ile-387–Thr-407. Topologically, residues Tyr-408 to Ala-490 are cytoplasmic. The segment at Pro-419 to Ala-490 is disordered. Basolateral sorting signal stretches follow at residues Gly-426–Pro-460 and Arg-461–Val-480. The span at Leu-475–Ala-490 shows a compositional bias: basic and acidic residues.

This sequence belongs to the major facilitator superfamily. Monocarboxylate porter (TC 2.A.1.13) family. Retinal pigment epithelium.

The protein resides in the basolateral cell membrane. It catalyses the reaction (S)-lactate(in) + H(+)(in) = (S)-lactate(out) + H(+)(out). Probable retinal pigment epithelium (RPE)-specific proton-coupled L-lactate transporter. May facilitate transport of lactate and H(+) out of the retina and could therefore play a role in pH and ion homeostasis of the outer retina. This Rattus norvegicus (Rat) protein is Monocarboxylate transporter 3 (Slc16a8).